Here is a 476-residue protein sequence, read N- to C-terminus: Ureidoglycolate hydrolase (476 aa).

Positions 1–25 (MESLKRFLCSIALLLISLLLPSSLA) are cleaved as a signal peptide. Mn(2+)-binding residues include histidine 138, aspartate 149, glutamate 184, and histidine 254. Residues 183 to 184 (EE), 254 to 257 (HIEQ), histidine 290, asparagine 340, arginine 353, 423 to 424 (YH), and histidine 448 contribute to the substrate site. The segment at 276-391 (APASLKVEFE…LSEFKIVNQD (116 aa)) is involved in dimerization. Histidine 448 is a Mn(2+) binding site.

This sequence belongs to the peptidase M20 family. In terms of assembly, homodimer. It depends on Mn(2+) as a cofactor. Ni(2+) is required as a cofactor. The cofactor is Co(2+).

The protein resides in the endoplasmic reticulum. It carries out the reaction (S)-ureidoglycolate + H2O + 2 H(+) = glyoxylate + 2 NH4(+) + CO2. It functions in the pathway nitrogen metabolism; (S)-allantoin degradation; glyoxylate from (S)-ureidoglycolate: step 1/1. Involved in the catabolism of purine nucleotides. Can use (S)-ureidoglycolate as substrate, but not (R)-ureidoglycolate or allantoate. The sequential activity of AAH, UGLYAH and UAH allows a complete purine breakdown without the intermediate generation of urea. The sequence is that of Ureidoglycolate hydrolase from Arabidopsis thaliana (Mouse-ear cress).